Here is a 178-residue protein sequence, read N- to C-terminus: Ribosome maturation factor RimP (178 aa).

The protein belongs to the RimP family.

The protein resides in the cytoplasm. Functionally, required for maturation of 30S ribosomal subunits. This is Ribosome maturation factor RimP from Mycolicibacterium paratuberculosis (strain ATCC BAA-968 / K-10) (Mycobacterium paratuberculosis).